Consider the following 105-residue polypeptide: uncharacterized protein (105 aa).

Belongs to the M.jannaschii MJ0023/MJ0349/MJ1072/MJ1074/MJ1107/MJECL16 family.

This is an uncharacterized protein from Methanocaldococcus jannaschii (strain ATCC 43067 / DSM 2661 / JAL-1 / JCM 10045 / NBRC 100440) (Methanococcus jannaschii).